Here is a 217-residue protein sequence, read N- to C-terminus: Phosphatidylserine decarboxylase proenzyme (217 aa).

The active-site Schiff-base intermediate with substrate; via pyruvic acid is Ser182. Ser182 bears the Pyruvic acid (Ser); by autocatalysis mark.

This sequence belongs to the phosphatidylserine decarboxylase family. PSD-A subfamily. As to quaternary structure, heterodimer of a large membrane-associated beta subunit and a small pyruvoyl-containing alpha subunit. It depends on pyruvate as a cofactor. Is synthesized initially as an inactive proenzyme. Formation of the active enzyme involves a self-maturation process in which the active site pyruvoyl group is generated from an internal serine residue via an autocatalytic post-translational modification. Two non-identical subunits are generated from the proenzyme in this reaction, and the pyruvate is formed at the N-terminus of the alpha chain, which is derived from the carboxyl end of the proenzyme. The post-translation cleavage follows an unusual pathway, termed non-hydrolytic serinolysis, in which the side chain hydroxyl group of the serine supplies its oxygen atom to form the C-terminus of the beta chain, while the remainder of the serine residue undergoes an oxidative deamination to produce ammonia and the pyruvoyl prosthetic group on the alpha chain.

Its subcellular location is the cell membrane. It carries out the reaction a 1,2-diacyl-sn-glycero-3-phospho-L-serine + H(+) = a 1,2-diacyl-sn-glycero-3-phosphoethanolamine + CO2. It functions in the pathway phospholipid metabolism; phosphatidylethanolamine biosynthesis; phosphatidylethanolamine from CDP-diacylglycerol: step 2/2. Its function is as follows. Catalyzes the formation of phosphatidylethanolamine (PtdEtn) from phosphatidylserine (PtdSer). The protein is Phosphatidylserine decarboxylase proenzyme of Prosthecochloris aestuarii (strain DSM 271 / SK 413).